We begin with the raw amino-acid sequence, 898 residues long: DNA damage-induced apoptosis suppressor protein (898 aa).

Disordered stretches follow at residues 191–210, 643–670, and 710–749; these read CGSQ…DSDL, SINT…HEGS, and YPIN…FEES. Composition is skewed to polar residues over residues 643-664 and 710-725; these read SINT…PSSS and YPIN…KPSL. The span at 726–741 shows a compositional bias: low complexity; sequence QSISPSRYSRPRSQSD.

In terms of tissue distribution, highly expressed in the testis, spleen and heart. Expressed at high levels in the primary spermatocytes and to a lesser extent in the round spermatids. Also found in the bone marrow, brain, lung, kidney and liver.

Its subcellular location is the cytoplasm. The protein resides in the nucleus. Functionally, may be an anti-apoptotic protein involved in DNA repair or cell survival. The protein is DNA damage-induced apoptosis suppressor protein (Ddias) of Mus musculus (Mouse).